A 239-amino-acid polypeptide reads, in one-letter code: Wilms tumor protein homolog (239 aa).

Positions 43–51 (MTWNQMNLG) match the 9aaTAD motif. 3 C2H2-type zinc fingers span residues 113–137 (FMCAYPGCNKRYFKLSHLQMHSRKH), 143–167 (YQCDFKDCERRFSRSDQLKRHQRRH), and 173–195 (FQCKTCQRKFSRSDHLKTHTRTH). Important for interaction with target DNA regions lie at residues 157–171 (SDQLKRHQRRHTGVK) and 183–191 (SRSDHLKTH). Positions 198–200 (KTS) match the KTS motif motif. The C2H2-type 4 zinc-finger motif lies at 204 to 228 (FSCRWPSCQKKFARSDELVRHHNMH). Residue Lys234 forms a Glycyl lysine isopeptide (Lys-Gly) (interchain with G-Cter in SUMO2) linkage.

The protein belongs to the EGR C2H2-type zinc-finger protein family. Interacts with ZNF224 via the zinc-finger region. Interacts with WTAP, AMER1 and SRY. Homodimer. Interacts with WTIP. Interacts with actively translating polysomes. Detected in nuclear ribonucleoprotein (mRNP) particles. Interacts with U2AF2. Interacts with HNRNPU via the zinc-finger region. Interacts with CITED2.

The protein resides in the nucleus speckle. It is found in the nucleus. Its subcellular location is the nucleoplasm. The protein localises to the cytoplasm. Its function is as follows. Transcription factor that plays an important role in cellular development and cell survival. Recognizes and binds to the DNA sequence 5'-GCG(T/G)GGGCG-3'. Regulates the expression of numerous target genes, including EPO. Plays an essential role for development of the urogenital system. It has a tumor suppressor as well as an oncogenic role in tumor formation. Function may be isoform-specific: isoforms lacking the KTS motif may act as transcription factors. Isoforms containing the KTS motif may bind mRNA and play a role in mRNA metabolism or splicing. In Sminthopsis macroura (Stripe-faced dunnart), this protein is Wilms tumor protein homolog (WT1).